The sequence spans 49 residues: uncharacterized protein (49 aa).

The first 22 residues, 1-22 (MIQKPILLSSFLFLYIRALLHS), serve as a signal peptide directing secretion.

This is an uncharacterized protein from Saccharomyces cerevisiae (strain ATCC 204508 / S288c) (Baker's yeast).